The chain runs to 182 residues: UPF0397 protein YdcD (182 aa).

The next 5 membrane-spanning stretches (helical) occupy residues 8-28 (IVVATGIGAALFVIIGWLINI), 42-62 (AVLALFSALFGPLAGFLIGFI), 74-94 (APWWTWVLGSGLIGLFLAFGV), 114-134 (IVQFLANVVVWGIIAPIGDVL), and 146-166 (QGIVAGLVNALTIAVAGTLLL).

It belongs to the UPF0397 family.

The protein localises to the cell membrane. This Lactococcus lactis subsp. lactis (strain IL1403) (Streptococcus lactis) protein is UPF0397 protein YdcD (ydcD).